Here is a 462-residue protein sequence, read N- to C-terminus: Glycine--tRNA ligase (462 aa).

R101 and E164 together coordinate substrate. Residues 196 to 198, 206 to 211, 283 to 284, and 327 to 330 each bind ATP; these read RNE, FRTREF, EL, and GVDR. 211–215 contacts substrate; sequence FEQME. A substrate-binding site is contributed by 323–327; that stretch reads EPSAG.

This sequence belongs to the class-II aminoacyl-tRNA synthetase family. As to quaternary structure, homodimer.

It localises to the cytoplasm. It catalyses the reaction tRNA(Gly) + glycine + ATP = glycyl-tRNA(Gly) + AMP + diphosphate. In terms of biological role, catalyzes the attachment of glycine to tRNA(Gly). The sequence is that of Glycine--tRNA ligase from Thermobifida fusca (strain YX).